Here is a 436-residue protein sequence, read N- to C-terminus: GTPase Der (436 aa).

EngA-type G domains follow at residues 4–167 (PTVA…PVEE) and 175–351 (IRFS…ESQN). GTP contacts are provided by residues 10-17 (GRPNVGKS), 57-61 (DTGGI), 119-122 (NKVD), 181-188 (GRPNVGKS), 229-233 (DTAGM), and 294-297 (NKWD). The 85-residue stretch at 352 to 436 (KRIPSAVLND…PINLIARKRK (85 aa)) folds into the KH-like domain.

Belongs to the TRAFAC class TrmE-Era-EngA-EngB-Septin-like GTPase superfamily. EngA (Der) GTPase family. In terms of assembly, associates with the 50S ribosomal subunit.

GTPase that plays an essential role in the late steps of ribosome biogenesis. In Streptococcus agalactiae serotype Ia (strain ATCC 27591 / A909 / CDC SS700), this protein is GTPase Der.